The chain runs to 166 residues: Disulfide bond formation protein B (166 aa).

At 1 to 10 (MGLNITNRQG) the chain is on the cytoplasmic side. The helical transmembrane segment at 11–27 (FLLVAAACAGAIGFALF) threads the bilayer. The Periplasmic portion of the chain corresponds to 28-45 (AQYQLGEEPCPLCILQRI). Cys-37 and Cys-40 are joined by a disulfide. The helical transmembrane segment at 46-62 (GVMAVGALALLAALHNP) threads the bilayer. Residues 63–69 (GKTGAKV) are Cytoplasmic-facing. The chain crosses the membrane as a helical span at residues 70-86 (WGGLMTLAALSGAGVSL). At 87–143 (RQLWLQSLPADQVPQCGPGLEFLMESFPLWEVLSKVLKGSGECAAIQGRFLGMTMPF) the chain is on the periplasmic side. An intrachain disulfide couples Cys-102 to Cys-129. A helical membrane pass occupies residues 144–162 (WVAVFFAGVIVWTLWLVGR). At 163 to 166 (RRRG) the chain is on the cytoplasmic side.

It belongs to the DsbB family.

It localises to the cell inner membrane. Its function is as follows. Required for disulfide bond formation in some periplasmic proteins. Acts by oxidizing the DsbA protein. This is Disulfide bond formation protein B from Chromobacterium violaceum (strain ATCC 12472 / DSM 30191 / JCM 1249 / CCUG 213 / NBRC 12614 / NCIMB 9131 / NCTC 9757 / MK).